Consider the following 120-residue polypeptide: Small ribosomal subunit protein uS13 (120 aa).

Positions 92–120 are disordered; it reads HRKGLPVRGQTTKNNARTRKGKKKTVGSK. Residues 107-120 are compositionally biased toward basic residues; that stretch reads ARTRKGKKKTVGSK.

It belongs to the universal ribosomal protein uS13 family. In terms of assembly, part of the 30S ribosomal subunit. Forms a loose heterodimer with protein S19. Forms two bridges to the 50S subunit in the 70S ribosome.

Functionally, located at the top of the head of the 30S subunit, it contacts several helices of the 16S rRNA. In the 70S ribosome it contacts the 23S rRNA (bridge B1a) and protein L5 of the 50S subunit (bridge B1b), connecting the 2 subunits; these bridges are implicated in subunit movement. Contacts the tRNAs in the A and P-sites. In Helicobacter hepaticus (strain ATCC 51449 / 3B1), this protein is Small ribosomal subunit protein uS13.